The primary structure comprises 22 residues: Caerin-3.2 (22 aa).

K22 is modified (lysine amide).

In terms of tissue distribution, expressed by the skin parotoid and/or rostral glands.

The protein localises to the secreted. Antibacterial peptide, that adopts an alpha helical conformation which can disrupt bacterial membranes. Each caerin displays a different antimicrobial specificity. In Ranoidea caerulea (Green tree frog), this protein is Caerin-3.2.